The chain runs to 530 residues: UPF0422 protein lpl2888 (530 aa).

An N-terminal signal peptide occupies residues 1–19; the sequence is MKFKKIILALACLSSPLYA. The stretch at 20–66 forms a coiled coil; the sequence is DQDQQLKSEIQRLQHQAEDLQAQLNRLQKQLANHKSSQQKHEQQAAT. Residues 50–81 are disordered; the sequence is LANHKSSQQKHEQQAATKPAEPQSKPTVKSGA.

It belongs to the UPF0422 family.

This chain is UPF0422 protein lpl2888, found in Legionella pneumophila (strain Lens).